We begin with the raw amino-acid sequence, 271 residues long: Phosphatidate cytidylyltransferase (271 aa).

Transmembrane regions (helical) follow at residues 12 to 32 (LLPI…ALFI), 53 to 73 (FGRV…YHLP), 75 to 95 (LAGA…VLVL), 111 to 131 (LGMG…LKQW), 136 to 156 (GLII…YFSG), 174 to 194 (WEGV…VGLY), 199 to 219 (LGAL…SIVG), and 251 to 271 (SLTA…WGAP).

This sequence belongs to the CDS family.

It is found in the cell inner membrane. It catalyses the reaction a 1,2-diacyl-sn-glycero-3-phosphate + CTP + H(+) = a CDP-1,2-diacyl-sn-glycerol + diphosphate. Its pathway is phospholipid metabolism; CDP-diacylglycerol biosynthesis; CDP-diacylglycerol from sn-glycerol 3-phosphate: step 3/3. The polypeptide is Phosphatidate cytidylyltransferase (cdsA) (Pseudomonas aeruginosa (strain ATCC 15692 / DSM 22644 / CIP 104116 / JCM 14847 / LMG 12228 / 1C / PRS 101 / PAO1)).